Reading from the N-terminus, the 1360-residue chain is DNA-directed RNA polymerase subunit beta (1360 aa).

This sequence belongs to the RNA polymerase beta chain family. As to quaternary structure, the RNAP catalytic core consists of 2 alpha, 1 beta, 1 beta' and 1 omega subunit. When a sigma factor is associated with the core the holoenzyme is formed, which can initiate transcription.

The enzyme catalyses RNA(n) + a ribonucleoside 5'-triphosphate = RNA(n+1) + diphosphate. DNA-dependent RNA polymerase catalyzes the transcription of DNA into RNA using the four ribonucleoside triphosphates as substrates. This is DNA-directed RNA polymerase subunit beta from Caulobacter sp. (strain K31).